The sequence spans 342 residues: Glucokinase (342 aa).

15–20 (GDVGGT) is an ATP binding site.

This sequence belongs to the bacterial glucokinase family.

The protein localises to the cytoplasm. It catalyses the reaction D-glucose + ATP = D-glucose 6-phosphate + ADP + H(+). This chain is Glucokinase, found in Ralstonia nicotianae (strain ATCC BAA-1114 / GMI1000) (Ralstonia solanacearum).